The chain runs to 227 residues: 2,3-bisphosphoglycerate-dependent phosphoglycerate mutase (227 aa).

Residues 7-14 (RHGFSEWN), 20-21 (TG), arginine 59, 86-89 (ERHY), lysine 97, 113-114 (RR), and 182-183 (GN) contribute to the substrate site. Residue histidine 8 is the Tele-phosphohistidine intermediate of the active site. Residue glutamate 86 is the Proton donor/acceptor of the active site.

The protein belongs to the phosphoglycerate mutase family. BPG-dependent PGAM subfamily. In terms of assembly, homodimer.

It catalyses the reaction (2R)-2-phosphoglycerate = (2R)-3-phosphoglycerate. The protein operates within carbohydrate degradation; glycolysis; pyruvate from D-glyceraldehyde 3-phosphate: step 3/5. Functionally, catalyzes the interconversion of 2-phosphoglycerate and 3-phosphoglycerate. This chain is 2,3-bisphosphoglycerate-dependent phosphoglycerate mutase, found in Glaesserella parasuis serovar 5 (strain SH0165) (Haemophilus parasuis).